The chain runs to 484 residues: Poly(A) RNA polymerase GLD2 (484 aa).

2 positions are modified to phosphoserine: Ser-62 and Ser-69. A Nuclear localization signal motif is present at residues 76 to 92 (KRLSDEKNLPLDGKRQR). Position 95 is a phosphoserine (Ser-95). Residues Asp-213 and Asp-215 each contribute to the Mg(2+) site. The region spanning 386 to 440 (NLGDLLLGFLKYYATEFDWNSQMISVREAKAIPRPDGIEWRNKYICVEEPFDGTN) is the PAP-associated domain.

The protein belongs to the DNA polymerase type-B-like family. GLD2 subfamily. Interacts with CPEB1, CPEB2, CPSF1 and PABPC1. Interacts with QKI isoform QKI7; promoting recruitment to miRNA miR-122 and miR-122 stabilization. Mg(2+) serves as cofactor. It depends on Mn(2+) as a cofactor.

It is found in the cytoplasm. It localises to the nucleus. The enzyme catalyses RNA(n) + ATP = RNA(n)-3'-adenine ribonucleotide + diphosphate. Cytoplasmic poly(A) RNA polymerase that adds successive AMP monomers to the 3'-end of specific RNAs, forming a poly(A) tail. In contrast to the canonical nuclear poly(A) RNA polymerase, it only adds poly(A) to selected cytoplasmic mRNAs. Does not play a role in replication-dependent histone mRNA degradation. Adds a single nucleotide to the 3' end of specific miRNAs, monoadenylation stabilizes and prolongs the activity of some but not all miRNAs. This chain is Poly(A) RNA polymerase GLD2, found in Bos taurus (Bovine).